The chain runs to 369 residues: tRNA/tmRNA (uracil-C(5))-methyltransferase (369 aa).

Residues Q190, Y218, N223, E239, and D301 each coordinate S-adenosyl-L-methionine. C326 serves as the catalytic Nucleophile. Residue E360 is the Proton acceptor of the active site.

It belongs to the class I-like SAM-binding methyltransferase superfamily. RNA M5U methyltransferase family. TrmA subfamily.

The enzyme catalyses uridine(54) in tRNA + S-adenosyl-L-methionine = 5-methyluridine(54) in tRNA + S-adenosyl-L-homocysteine + H(+). It carries out the reaction uridine(341) in tmRNA + S-adenosyl-L-methionine = 5-methyluridine(341) in tmRNA + S-adenosyl-L-homocysteine + H(+). Dual-specificity methyltransferase that catalyzes the formation of 5-methyluridine at position 54 (m5U54) in all tRNAs, and that of position 341 (m5U341) in tmRNA (transfer-mRNA). The polypeptide is tRNA/tmRNA (uracil-C(5))-methyltransferase (Vibrio cholerae serotype O1 (strain ATCC 39541 / Classical Ogawa 395 / O395)).